The primary structure comprises 622 residues: MRRDVRILLLGEAQVGKTSLILSLVGEEFPEEVPARAEEITIPADVTPEKVPTHIVDYSEAEQTEEELQEEIHKANVVCVVYDVSEEATIEKIRTKWIPLVNGRTATGPRLPIILVGNKSDLRPGSTIEAVLPIMSQFPEIETCVECSAKHLRNISELFYYAQKAVLHPTAPLYDPEAKQLRPACAQALTRIFRLSDQDLDHALSDKELNAFQKSCFGHPLAPQALEDVKRVVCKNVAGGVQDDRLTLEGFLFLNTLFIQRGRHETTWTILRRFGYSDSLELTPDYLCPPLYVPPGCSTELNHRGYQFVQRVFEKHDQDHDGVLSPTELESLFSVFSVAPWGPELLHTVPTEAGCLSLRGYLCQWTLVTYLDVQHCLAHLGYLGYPTLCEQDSQAQAITVTREKRLDQEKGQTQRSVLMCKVLGARGVGKSAFLQAFLGHSLGEARDRDAPEKLPTHTINTVRVSGQEKYLILCEVNADSLLDTSLDTTCDVACLMFDSSDPETFVQCATIYKRYYMDGQTPCLFISSKADLPEGVAPPGLSPAEFCRRHRLPAPASFSCLGPAQSSIDVFTQLATMATFPHLAHTELHPTPFWLRGVLVAVGTAVAAVLSFSLYRVLVKSR.

Over 1 to 596 (MRRDVRILLL…ELHPTPFWLR (596 aa)) the chain is Cytoplasmic. The Miro 1 domain occupies 2–168 (RRDVRILLLG…FYYAQKAVLH (167 aa)). G16, K17, T18, and S19 together coordinate GTP. T18 is a Mg(2+) binding site. D57 contributes to the Mg(2+) binding site. Residue S59 coordinates GTP. Residue K96 forms a Glycyl lysine isopeptide (Lys-Gly) (interchain with G-Cter in ubiquitin) linkage. GTP-binding residues include N118, K119, D121, A149, and K150. A Glycyl lysine isopeptide (Lys-Gly) (interchain with G-Cter in ubiquitin) cross-link involves residue K119. A Glycyl lysine isopeptide (Lys-Gly) (interchain with G-Cter in ubiquitin) cross-link involves residue K164. EF-hand domains are found at residues 184 to 219 (ACAQ…CFGH) and 304 to 339 (RGYQ…FSVA). Ca(2+) is bound by residues D197, D199, D201, E208, D317, D319, D321, and E328. The Miro 2 domain maps to 415 to 580 (RSVLMCKVLG…FTQLATMATF (166 aa)). 5 residues coordinate GTP: G427, G429, K430, S431, and A432. Position 431 (S431) interacts with Mg(2+). E475 serves as a coordination point for Mg(2+). The GTP site is built by K529, D531, and C560. Residues 597 to 619 (GVLVAVGTAVAAVLSFSLYRVLV) form a helical; Anchor for type IV membrane protein membrane-spanning segment. The Mitochondrial intermembrane portion of the chain corresponds to 620–622 (KSR).

The protein belongs to the mitochondrial Rho GTPase family. Homodimer. Interacts with the kinesin-binding proteins TRAK1/OIP106 and TRAK2/GRIF1, forming a link between mitochondria and the trafficking apparatus of the microtubules. Interacts with ARMCX3. Found in a complex with KIF5B, OGT, RHOT1 and TRAK1. Ubiquitinated by PRKN in a PINK1-dependent manner, leading to its degradation.

Its subcellular location is the mitochondrion outer membrane. The catalysed reaction is GTP + H2O = GDP + phosphate + H(+). The enzyme catalyses ATP + H2O = ADP + phosphate + H(+). It catalyses the reaction UTP + H2O = UDP + phosphate + H(+). Functionally, atypical mitochondrial nucleoside-triphosphatase (NTPase) involved in mitochondrial trafficking. Probably involved in control of anterograde transport of mitochondria and their subcellular distribution. Can hydrolyze GTP, ATP and UTP. The sequence is that of Mitochondrial Rho GTPase 2 (Rhot2) from Rattus norvegicus (Rat).